The primary structure comprises 245 residues: Lytic switch protein BZLF1 (245 aa).

Residues 1 to 167 (MMDPNSTSED…RTRKPLQPES (167 aa)) are transactivation. Residues Thr-14 and Thr-159 each carry the phosphothreonine modification. The tract at residues 145 to 167 (GAPQPAPAAAPARRTRKPLQPES) is disordered. A Bipartite nuclear localization signal motif is present at residues 157–194 (RRTRKPLQPESLEECDSELEIKRYKNRVASRKCRAKFK). Phosphoserine occurs at positions 167, 173, and 186. Residues 178 to 195 (KRYKNRVASRKCRAKFKH) form a basic motif region. One can recognise a bZIP domain in the interval 178–228 (KRYKNRVASRKCRAKFKHLLQHYREVASAKSSENDRLRLLLKQMCPSLDVD). Residues 196–228 (LLQHYREVASAKSSENDRLRLLLKQMCPSLDVD) are leucine-zipper. The tract at residues 229-245 (SIIPRTPDVLHEDLLNF) is accessory activation domain.

The protein belongs to the bZIP family. In terms of assembly, homodimer. Interacts (via b-ZIP domain) with the DNA polymerase processivity factor BMRF1 (via N-terminus); this interaction may inhibit BZLF1-induced transcription of the BMRF1 promoter. Interacts with human UBN1, CRTC2 and RACK1. Interacts (via N-terminus) with human PAX5 (via N-terminus); this interaction inhibits BZLF1-mediated lytic viral reactivation. Interacts (via leucine-zipper domain) with host CEBPA; this interaction induces G1 host cell cycle arrest. Interacts (via C-terminus) with host TP53BP1 (via C-terminus); this interaction is involved in the activation of the viral lytic cycle. Interacts with host chromatin-remodeling ATPase INO80; this interaction participates to the activation of early lytic viral genes by BZLF1. Interacts with host regulator of chromatin SMARCA5/hSNF2H; this interaction participates to the activation of early lytic viral genes by BZLF1. Interacts with host PLSCR1/Phospholipid scramblase 1; this interaction negatively regulates the transcriptional regulatory activity of BZLF1 by preventing the formation of the BZLF1-CBP complex.

Its subcellular location is the host nucleus. In terms of biological role, transcription factor that acts as a molecular switch to induce the transition from the latent to the lytic or productive phase of the virus cycle. Mediates the switch from the latent to the lytic cycle of infection in cells containing a highly methylated viral genome. Probably binds to silenced chromatin and recruits host chromatin-remodeling enzymes. Regulates this switch by binding to 2 types of ZEBRA response elements (ZREs): the CpG-free AP-1 like elements (latency) and the methylated CpG-containing elements (lytic replication). Activates preferentially the methylated forms of the viral lytic R (BRLF1) and Na (BRRF1) gene promoters, the latters being the first genes activated during Z-mediated reactivation in latently infected cells. BZLF1 and BRLF1 act together to trigger lytic replication. Also binds the lytic origin of replication, oriLyt. Induces G1 cell cycle arrest by stabilizing the host CCAAT/enhancer binding protein CEBPA. This function is important because the lytic cycle preferentially takes place in host cells arrested in G1. The sequence is that of Lytic switch protein BZLF1 from Homo sapiens (Human).